Consider the following 576-residue polypeptide: Glutamine--tRNA ligase (576 aa).

Positions 47–57 match the 'HIGH' region motif; the sequence is PEPNGYLHIGH. ATP-binding positions include 48-50 and 54-60; these read EPN and HIGHAKS. Positions 80 and 229 each coordinate L-glutamine. ATP is bound by residues Thr248 and 283 to 284; that span reads RL. Residues 290-294 carry the 'KMSKS' region motif; the sequence is ITSKR.

The protein belongs to the class-I aminoacyl-tRNA synthetase family. Monomer.

Its subcellular location is the cytoplasm. It carries out the reaction tRNA(Gln) + L-glutamine + ATP = L-glutaminyl-tRNA(Gln) + AMP + diphosphate. This chain is Glutamine--tRNA ligase, found in Ralstonia pickettii (strain 12J).